Consider the following 150-residue polypeptide: D-aminoacyl-tRNA deacylase (150 aa).

Positions Gly-138–Pro-139 match the Gly-cisPro motif, important for rejection of L-amino acids motif.

It belongs to the DTD family. In terms of assembly, homodimer.

It localises to the cytoplasm. It carries out the reaction glycyl-tRNA(Ala) + H2O = tRNA(Ala) + glycine + H(+). The enzyme catalyses a D-aminoacyl-tRNA + H2O = a tRNA + a D-alpha-amino acid + H(+). In terms of biological role, an aminoacyl-tRNA editing enzyme that deacylates mischarged D-aminoacyl-tRNAs. Also deacylates mischarged glycyl-tRNA(Ala), protecting cells against glycine mischarging by AlaRS. Acts via tRNA-based rather than protein-based catalysis; rejects L-amino acids rather than detecting D-amino acids in the active site. By recycling D-aminoacyl-tRNA to D-amino acids and free tRNA molecules, this enzyme counteracts the toxicity associated with the formation of D-aminoacyl-tRNA entities in vivo and helps enforce protein L-homochirality. The sequence is that of D-aminoacyl-tRNA deacylase from Porphyromonas gingivalis (strain ATCC 33277 / DSM 20709 / CIP 103683 / JCM 12257 / NCTC 11834 / 2561).